Consider the following 570-residue polypeptide: Probable metalloreductase AIM14 (570 aa).

7 helical membrane passes run 21–41 (IKYG…LALL), 70–90 (AIHL…HYSL), 101–118 (LGRL…LTLR), 142–162 (IITV…AIDD), 177–197 (FVGF…IGPM), 204–224 (LFYI…PIHS), and 230–250 (FPFL…RIVF). A Ferric oxidoreductase domain is found at 101–219 (LGRLSYALIP…NLVNVAFILL (119 aa)). The region spanning 250–388 (FAKSLMILNK…GGSGISFALP (139 aa)) is the FAD-binding FR-type domain. Polar residues predominate over residues 481-505 (SNFNSENADSNDNTPETSHSPTKEN). Positions 481–507 (SNFNSENADSNDNTPETSHSPTKENGS) are disordered.

Belongs to the ferric reductase (FRE) family. AIM14 subfamily. Interacts with ribosomes.

It is found in the membrane. Probable cell surface metalloreductase. May be involved in iron or copper homeostasis. This is Probable metalloreductase AIM14 (AIM14) from Saccharomyces cerevisiae (strain RM11-1a) (Baker's yeast).